Consider the following 247-residue polypeptide: Protein GrpE (247 aa).

Basic and acidic residues predominate over residues 31-49 (QKEETKTTNKDNQKEDETV). Residues 31-79 (QKEETKTTNKDNQKEDETVKNQSNQSNQSNQTKQTNTKQQKHQPKENSH) are disordered. The segment covering 50–68 (KNQSNQSNQSNQTKQTNTK) has biased composition (low complexity).

This sequence belongs to the GrpE family. Homodimer.

The protein resides in the cytoplasm. Its function is as follows. Participates actively in the response to hyperosmotic and heat shock by preventing the aggregation of stress-denatured proteins, in association with DnaK and GrpE. It is the nucleotide exchange factor for DnaK and may function as a thermosensor. Unfolded proteins bind initially to DnaJ; upon interaction with the DnaJ-bound protein, DnaK hydrolyzes its bound ATP, resulting in the formation of a stable complex. GrpE releases ADP from DnaK; ATP binding to DnaK triggers the release of the substrate protein, thus completing the reaction cycle. Several rounds of ATP-dependent interactions between DnaJ, DnaK and GrpE are required for fully efficient folding. In Onion yellows phytoplasma (strain OY-M), this protein is Protein GrpE.